Reading from the N-terminus, the 110-residue chain is UPF0060 membrane protein Haur_1798 (110 aa).

Transmembrane regions (helical) follow at residues 7–27 (VVLFILAGLAEIAGGYLVWQW), 33–53 (SIWFGVLGAILLVGYGFLPTL), 63–83 (VYAAYGGVFIVLSLAWGWLID), and 89–109 (QPSLVGACLALVGAAIILYWP).

Belongs to the UPF0060 family.

The protein resides in the cell membrane. The protein is UPF0060 membrane protein Haur_1798 of Herpetosiphon aurantiacus (strain ATCC 23779 / DSM 785 / 114-95).